The sequence spans 415 residues: Diaminopimelate decarboxylase (415 aa).

K54 is subject to N6-(pyridoxal phosphate)lysine. Pyridoxal 5'-phosphate contacts are provided by residues G223 and 264–267; that span reads EPGR. Residues R267, R303, and Y307 each contribute to the substrate site. The Proton donor role is filled by C338. Substrate contacts are provided by E339 and Y374. Y374 is a pyridoxal 5'-phosphate binding site.

This sequence belongs to the Orn/Lys/Arg decarboxylase class-II family. LysA subfamily. In terms of assembly, homodimer. It depends on pyridoxal 5'-phosphate as a cofactor.

It catalyses the reaction meso-2,6-diaminopimelate + H(+) = L-lysine + CO2. It participates in amino-acid biosynthesis; L-lysine biosynthesis via DAP pathway; L-lysine from DL-2,6-diaminopimelate: step 1/1. In terms of biological role, specifically catalyzes the decarboxylation of meso-diaminopimelate (meso-DAP) to L-lysine. This chain is Diaminopimelate decarboxylase, found in Buchnera aphidicola subsp. Schizaphis graminum (strain Sg).